The following is a 326-amino-acid chain: Aspartate carbamoyltransferase catalytic subunit (326 aa).

Positions 58 and 59 each coordinate carbamoyl phosphate. Lys-86 provides a ligand contact to L-aspartate. Carbamoyl phosphate-binding residues include Arg-108, His-141, and Gln-144. 2 residues coordinate L-aspartate: Arg-181 and Arg-239. Gly-280 and Pro-281 together coordinate carbamoyl phosphate.

This sequence belongs to the aspartate/ornithine carbamoyltransferase superfamily. ATCase family. As to quaternary structure, heterododecamer (2C3:3R2) of six catalytic PyrB chains organized as two trimers (C3), and six regulatory PyrI chains organized as three dimers (R2).

It catalyses the reaction carbamoyl phosphate + L-aspartate = N-carbamoyl-L-aspartate + phosphate + H(+). It participates in pyrimidine metabolism; UMP biosynthesis via de novo pathway; (S)-dihydroorotate from bicarbonate: step 2/3. Its function is as follows. Catalyzes the condensation of carbamoyl phosphate and aspartate to form carbamoyl aspartate and inorganic phosphate, the committed step in the de novo pyrimidine nucleotide biosynthesis pathway. The protein is Aspartate carbamoyltransferase catalytic subunit of Synechococcus sp. (strain JA-2-3B'a(2-13)) (Cyanobacteria bacterium Yellowstone B-Prime).